Consider the following 401-residue polypeptide: 1-deoxy-D-xylulose 5-phosphate reductoisomerase (401 aa).

NADPH contacts are provided by T10, G11, S12, I13, G36, R37, N38, and N124. K125 is a binding site for 1-deoxy-D-xylulose 5-phosphate. NADPH is bound at residue E126. D150 lines the Mn(2+) pocket. 1-deoxy-D-xylulose 5-phosphate-binding residues include S151, E152, S176, and H199. Mn(2+) is bound at residue E152. Position 205 (G205) interacts with NADPH. Residues S212, N217, K218, and E221 each contribute to the 1-deoxy-D-xylulose 5-phosphate site. E221 provides a ligand contact to Mn(2+).

Belongs to the DXR family. It depends on Mg(2+) as a cofactor. Mn(2+) serves as cofactor.

It catalyses the reaction 2-C-methyl-D-erythritol 4-phosphate + NADP(+) = 1-deoxy-D-xylulose 5-phosphate + NADPH + H(+). It participates in isoprenoid biosynthesis; isopentenyl diphosphate biosynthesis via DXP pathway; isopentenyl diphosphate from 1-deoxy-D-xylulose 5-phosphate: step 1/6. Functionally, catalyzes the NADPH-dependent rearrangement and reduction of 1-deoxy-D-xylulose-5-phosphate (DXP) to 2-C-methyl-D-erythritol 4-phosphate (MEP). The protein is 1-deoxy-D-xylulose 5-phosphate reductoisomerase of Acaryochloris marina (strain MBIC 11017).